We begin with the raw amino-acid sequence, 524 residues long: Bifunctional purine biosynthesis protein PurH (524 aa).

Positions 1 to 144 (MTRRALVSVS…KNSAHVGVVV (144 aa)) constitute an MGS-like domain.

The protein belongs to the PurH family.

It catalyses the reaction (6R)-10-formyltetrahydrofolate + 5-amino-1-(5-phospho-beta-D-ribosyl)imidazole-4-carboxamide = 5-formamido-1-(5-phospho-D-ribosyl)imidazole-4-carboxamide + (6S)-5,6,7,8-tetrahydrofolate. It carries out the reaction IMP + H2O = 5-formamido-1-(5-phospho-D-ribosyl)imidazole-4-carboxamide. The protein operates within purine metabolism; IMP biosynthesis via de novo pathway; 5-formamido-1-(5-phospho-D-ribosyl)imidazole-4-carboxamide from 5-amino-1-(5-phospho-D-ribosyl)imidazole-4-carboxamide (10-formyl THF route): step 1/1. It functions in the pathway purine metabolism; IMP biosynthesis via de novo pathway; IMP from 5-formamido-1-(5-phospho-D-ribosyl)imidazole-4-carboxamide: step 1/1. The polypeptide is Bifunctional purine biosynthesis protein PurH (Anaeromyxobacter sp. (strain K)).